The primary structure comprises 199 residues: Early nodulin-like protein 3 (199 aa).

The N-terminal stretch at 1–23 (MGLVMRFDLYLMFVMLMGLGFTI) is a signal peptide. The 102-residue stretch at 27 to 128 (YKFYVGGKDG…GQKLAVKVLS (102 aa)) folds into the Phytocyanin domain. N-linked (GlcNAc...) asparagine glycans are attached at residues Asn-57 and Asn-83. A disulfide bond links Cys-82 and Cys-116. Residues 130 to 180 (VHHSHSPRHTSPSPSPVHQELSSPGPSPGVEPSSDSNSRVPAPGPATAPNS) are disordered. Over residues 138–165 (HTSPSPSPVHQELSSPGPSPGVEPSSDS) the composition is skewed to low complexity. Asn-179 carries GPI-anchor amidated asparagine lipidation. A propeptide spans 180–199 (SAGLVGPGMVVLVIMISSLF) (removed in mature form).

The protein belongs to the early nodulin-like (ENODL) family. In terms of tissue distribution, confined to flowers.

The protein resides in the cell membrane. May act as a carbohydrate transporter. This Arabidopsis thaliana (Mouse-ear cress) protein is Early nodulin-like protein 3.